The primary structure comprises 249 residues: Nodulation protein H (249 aa).

In terms of biological role, required for the formation of sulfated nod factor. Proposed to transfer activated sulfate (PAPS) to a N-acetylglucosamine of the nod factor. The protein is Nodulation protein H (nodH) of Rhizobium tropici.